Here is a 658-residue protein sequence, read N- to C-terminus: Threonine--tRNA ligase (658 aa).

In terms of domain architecture, TGS spans 1-61 (MSDVRVIIQR…RDGESVEPVE (61 aa)). The segment at 259–554 (DHRKLGNELD…LLEHYAGAFP (296 aa)) is catalytic. Cys-353, His-404, and His-531 together coordinate Zn(2+).

The protein belongs to the class-II aminoacyl-tRNA synthetase family. In terms of assembly, homodimer. The cofactor is Zn(2+).

The protein resides in the cytoplasm. The enzyme catalyses tRNA(Thr) + L-threonine + ATP = L-threonyl-tRNA(Thr) + AMP + diphosphate + H(+). Catalyzes the attachment of threonine to tRNA(Thr) in a two-step reaction: L-threonine is first activated by ATP to form Thr-AMP and then transferred to the acceptor end of tRNA(Thr). Also edits incorrectly charged L-seryl-tRNA(Thr). This is Threonine--tRNA ligase from Streptomyces griseus subsp. griseus (strain JCM 4626 / CBS 651.72 / NBRC 13350 / KCC S-0626 / ISP 5235).